The primary structure comprises 222 residues: 7-cyano-7-deazaguanine synthase (222 aa).

8-18 (LSGGMDSTTAA) contacts ATP. Zn(2+) is bound by residues Cys-187, Cys-195, Cys-198, and Cys-201.

Belongs to the QueC family. Requires Zn(2+) as cofactor.

It carries out the reaction 7-carboxy-7-deazaguanine + NH4(+) + ATP = 7-cyano-7-deazaguanine + ADP + phosphate + H2O + H(+). The protein operates within purine metabolism; 7-cyano-7-deazaguanine biosynthesis. Functionally, catalyzes the ATP-dependent conversion of 7-carboxy-7-deazaguanine (CDG) to 7-cyano-7-deazaguanine (preQ(0)). In Nautilia profundicola (strain ATCC BAA-1463 / DSM 18972 / AmH), this protein is 7-cyano-7-deazaguanine synthase.